The sequence spans 371 residues: Anhydro-N-acetylmuramic acid kinase (371 aa).

Residue 10-17 (GTSLDGID) participates in ATP binding.

It belongs to the anhydro-N-acetylmuramic acid kinase family.

The catalysed reaction is 1,6-anhydro-N-acetyl-beta-muramate + ATP + H2O = N-acetyl-D-muramate 6-phosphate + ADP + H(+). Its pathway is amino-sugar metabolism; 1,6-anhydro-N-acetylmuramate degradation. It participates in cell wall biogenesis; peptidoglycan recycling. In terms of biological role, catalyzes the specific phosphorylation of 1,6-anhydro-N-acetylmuramic acid (anhMurNAc) with the simultaneous cleavage of the 1,6-anhydro ring, generating MurNAc-6-P. Is required for the utilization of anhMurNAc either imported from the medium or derived from its own cell wall murein, and thus plays a role in cell wall recycling. This Chromohalobacter salexigens (strain ATCC BAA-138 / DSM 3043 / CIP 106854 / NCIMB 13768 / 1H11) protein is Anhydro-N-acetylmuramic acid kinase.